The chain runs to 173 residues: Adenine phosphoribosyltransferase (173 aa).

This sequence belongs to the purine/pyrimidine phosphoribosyltransferase family. Homodimer.

It is found in the cytoplasm. The catalysed reaction is AMP + diphosphate = 5-phospho-alpha-D-ribose 1-diphosphate + adenine. It participates in purine metabolism; AMP biosynthesis via salvage pathway; AMP from adenine: step 1/1. In terms of biological role, catalyzes a salvage reaction resulting in the formation of AMP, that is energically less costly than de novo synthesis. The polypeptide is Adenine phosphoribosyltransferase (Solibacter usitatus (strain Ellin6076)).